Consider the following 345-residue polypeptide: Tropomodulin-4 (345 aa).

Residues 42 to 63 (NMLLPAGLRQRDQTKKSPTGPL) are disordered.

The protein belongs to the tropomodulin family. As to quaternary structure, binds to the N-terminus of tropomyosin and to actin.

Its subcellular location is the cytoplasm. It localises to the cytoskeleton. Functionally, blocks the elongation and depolymerization of the actin filaments at the pointed end. The Tmod/TM complex contributes to the formation of the short actin protofilament, which in turn defines the geometry of the membrane skeleton. This chain is Tropomodulin-4 (TMOD4), found in Bos taurus (Bovine).